The following is a 378-amino-acid chain: Phosphatidyl-myo-inositol mannosyltransferase (378 aa).

GDP-alpha-D-mannose-binding residues include Y9 and G16. Residues Q18, 62–63 (YN), and R68 contribute to the a 1,2-diacyl-sn-glycero-3-phospho-(1D-myo-inositol) site. GDP-alpha-D-mannose-binding positions include R196, 201 to 202 (RK), 251 to 253 (VDD), K256, 274 to 278 (ESFGI), and E282.

The protein belongs to the glycosyltransferase group 1 family. As to quaternary structure, monomer. Mg(2+) is required as a cofactor.

The protein localises to the cell membrane. It carries out the reaction a 1,2-diacyl-sn-glycero-3-phospho-(1D-myo-inositol) + GDP-alpha-D-mannose = a 1,2-diacyl-sn-glycero-3-phospho-[alpha-D-mannopyranosyl-(1&lt;-&gt;6)-D-myo-inositol] + GDP + H(+). It functions in the pathway phospholipid metabolism; phosphatidylinositol metabolism. Its function is as follows. Involved in the biosynthesis of phosphatidyl-myo-inositol mannosides (PIM) which are early precursors in the biosynthesis of lipomannans (LM) and lipoarabinomannans (LAM). Catalyzes the addition of a mannosyl residue from GDP-D-mannose (GDP-Man) to the position 2 of the carrier lipid phosphatidyl-myo-inositol (PI) to generate a phosphatidyl-myo-inositol bearing an alpha-1,2-linked mannose residue (PIM1). The polypeptide is Phosphatidyl-myo-inositol mannosyltransferase (Mycobacterium bovis (strain ATCC BAA-935 / AF2122/97)).